The primary structure comprises 393 residues: Lipid-A-disaccharide synthase (393 aa).

This sequence belongs to the LpxB family.

The enzyme catalyses a lipid X + a UDP-2-N,3-O-bis[(3R)-3-hydroxyacyl]-alpha-D-glucosamine = a lipid A disaccharide + UDP + H(+). Its pathway is bacterial outer membrane biogenesis; LPS lipid A biosynthesis. Its function is as follows. Condensation of UDP-2,3-diacylglucosamine and 2,3-diacylglucosamine-1-phosphate to form lipid A disaccharide, a precursor of lipid A, a phosphorylated glycolipid that anchors the lipopolysaccharide to the outer membrane of the cell. In Rhodopseudomonas palustris (strain ATCC BAA-98 / CGA009), this protein is Lipid-A-disaccharide synthase.